Consider the following 473-residue polypeptide: Cysteine--tRNA ligase (473 aa).

Residue C30 participates in Zn(2+) binding. The 'HIGH' region motif lies at 32-42 (MTVYDYCHIGH). Residues C213, H238, and E242 each coordinate Zn(2+). The 'KMSKS' region motif lies at 270 to 274 (KMSKS). K273 is a binding site for ATP.

It belongs to the class-I aminoacyl-tRNA synthetase family. Monomer. It depends on Zn(2+) as a cofactor.

The protein localises to the cytoplasm. The catalysed reaction is tRNA(Cys) + L-cysteine + ATP = L-cysteinyl-tRNA(Cys) + AMP + diphosphate. This chain is Cysteine--tRNA ligase, found in Acinetobacter baylyi (strain ATCC 33305 / BD413 / ADP1).